We begin with the raw amino-acid sequence, 180 residues long: Ribulose bisphosphate carboxylase small subunit, chloroplastic 2 (180 aa).

Residues M1 to K56 constitute a chloroplast transit peptide.

It belongs to the RuBisCO small chain family. In terms of assembly, heterohexadecamer of 8 large and 8 small subunits.

It is found in the plastid. The protein resides in the chloroplast. Its function is as follows. RuBisCO catalyzes two reactions: the carboxylation of D-ribulose 1,5-bisphosphate, the primary event in carbon dioxide fixation, as well as the oxidative fragmentation of the pentose substrate. Both reactions occur simultaneously and in competition at the same active site. Although the small subunit is not catalytic it is essential for maximal activity. The chain is Ribulose bisphosphate carboxylase small subunit, chloroplastic 2 from Pisum sativum (Garden pea).